We begin with the raw amino-acid sequence, 973 residues long: UvrABC system protein A (973 aa).

34–41 (GLSGSGKS) contributes to the ATP binding site. 2 consecutive ABC transporter domains span residues 330–609 (WAKS…PNSI) and 629–958 (AKKN…QFLK). 662 to 669 (GVSGGGKS) is a binding site for ATP. A C4-type zinc finger spans residues 761–787 (CEACQGDGVIKIEMHFLPDVYVTCDVC).

It belongs to the ABC transporter superfamily. UvrA family. As to quaternary structure, forms a heterotetramer with UvrB during the search for lesions.

It is found in the cytoplasm. Functionally, the UvrABC repair system catalyzes the recognition and processing of DNA lesions. UvrA is an ATPase and a DNA-binding protein. A damage recognition complex composed of 2 UvrA and 2 UvrB subunits scans DNA for abnormalities. When the presence of a lesion has been verified by UvrB, the UvrA molecules dissociate. This Mesorhizobium japonicum (strain LMG 29417 / CECT 9101 / MAFF 303099) (Mesorhizobium loti (strain MAFF 303099)) protein is UvrABC system protein A.